A 404-amino-acid chain; its full sequence is Cysteine desulfurase IscS (404 aa).

Residues alanine 75–threonine 76, asparagine 155, glutamine 183, and serine 203–histidine 205 contribute to the pyridoxal 5'-phosphate site. Lysine 206 is subject to N6-(pyridoxal phosphate)lysine. Threonine 243 lines the pyridoxal 5'-phosphate pocket. Cysteine 328 acts as the Cysteine persulfide intermediate in catalysis. Residue cysteine 328 coordinates [2Fe-2S] cluster.

It belongs to the class-V pyridoxal-phosphate-dependent aminotransferase family. NifS/IscS subfamily. In terms of assembly, homodimer. Forms a heterotetramer with IscU, interacts with other sulfur acceptors. It depends on pyridoxal 5'-phosphate as a cofactor.

Its subcellular location is the cytoplasm. The enzyme catalyses (sulfur carrier)-H + L-cysteine = (sulfur carrier)-SH + L-alanine. It functions in the pathway cofactor biosynthesis; iron-sulfur cluster biosynthesis. Functionally, master enzyme that delivers sulfur to a number of partners involved in Fe-S cluster assembly, tRNA modification or cofactor biosynthesis. Catalyzes the removal of elemental sulfur atoms from cysteine to produce alanine. Functions as a sulfur delivery protein for Fe-S cluster synthesis onto IscU, an Fe-S scaffold assembly protein, as well as other S acceptor proteins. The chain is Cysteine desulfurase IscS from Pseudomonas aeruginosa (strain UCBPP-PA14).